The chain runs to 132 residues: uncharacterized protein (132 aa).

Disordered stretches follow at residues 36–69 (GLAS…PNIS) and 97–132 (QIND…PTAR). Phosphoserine is present on Ser101.

As to quaternary structure, copurifies with proteins HOL1, MMP1, PEX7 and PLB1.

This is an uncharacterized protein from Saccharomyces cerevisiae (strain ATCC 204508 / S288c) (Baker's yeast).